A 362-amino-acid chain; its full sequence is Holliday junction branch migration complex subunit RuvB (362 aa).

The interval 4-186 is large ATPase domain (RuvB-L); sequence PDRPQRLVEQ…FGIPLRMQFY (183 aa). Residues Ile-25, Arg-26, Gly-67, Lys-70, Thr-71, Thr-72, 133–135, Arg-176, Tyr-186, and Arg-223 each bind ATP; that span reads EDF. Thr-71 contributes to the Mg(2+) binding site. The segment at 187 to 257 is small ATPAse domain (RuvB-S); it reads EPEELQLIVA…AAGGALTRLE (71 aa). The segment at 260–362 is head domain (RuvB-H); that stretch reads RLGFDAMDRR…GTPEGEGEDV (103 aa). DNA contacts are provided by Arg-296, Arg-315, and Arg-320.

It belongs to the RuvB family. Homohexamer. Forms an RuvA(8)-RuvB(12)-Holliday junction (HJ) complex. HJ DNA is sandwiched between 2 RuvA tetramers; dsDNA enters through RuvA and exits via RuvB. An RuvB hexamer assembles on each DNA strand where it exits the tetramer. Each RuvB hexamer is contacted by two RuvA subunits (via domain III) on 2 adjacent RuvB subunits; this complex drives branch migration. In the full resolvosome a probable DNA-RuvA(4)-RuvB(12)-RuvC(2) complex forms which resolves the HJ.

It is found in the cytoplasm. It catalyses the reaction ATP + H2O = ADP + phosphate + H(+). The RuvA-RuvB-RuvC complex processes Holliday junction (HJ) DNA during genetic recombination and DNA repair, while the RuvA-RuvB complex plays an important role in the rescue of blocked DNA replication forks via replication fork reversal (RFR). RuvA specifically binds to HJ cruciform DNA, conferring on it an open structure. The RuvB hexamer acts as an ATP-dependent pump, pulling dsDNA into and through the RuvAB complex. RuvB forms 2 homohexamers on either side of HJ DNA bound by 1 or 2 RuvA tetramers; 4 subunits per hexamer contact DNA at a time. Coordinated motions by a converter formed by DNA-disengaged RuvB subunits stimulates ATP hydrolysis and nucleotide exchange. Immobilization of the converter enables RuvB to convert the ATP-contained energy into a lever motion, pulling 2 nucleotides of DNA out of the RuvA tetramer per ATP hydrolyzed, thus driving DNA branch migration. The RuvB motors rotate together with the DNA substrate, which together with the progressing nucleotide cycle form the mechanistic basis for DNA recombination by continuous HJ branch migration. Branch migration allows RuvC to scan DNA until it finds its consensus sequence, where it cleaves and resolves cruciform DNA. In Rhodospirillum centenum (strain ATCC 51521 / SW), this protein is Holliday junction branch migration complex subunit RuvB.